The primary structure comprises 388 residues: Succinate--CoA ligase [ADP-forming] subunit beta (388 aa).

One can recognise an ATP-grasp domain in the interval 9 to 244; sequence KQLFARSGLP…QSQEDPREAQ (236 aa). Residues lysine 46, 53–55, glutamate 99, threonine 102, and glutamate 107 contribute to the ATP site; that span reads GRG. Positions 199 and 213 each coordinate Mg(2+). Residues asparagine 264 and 321-323 contribute to the substrate site; that span reads GIV.

The protein belongs to the succinate/malate CoA ligase beta subunit family. As to quaternary structure, heterotetramer of two alpha and two beta subunits. Requires Mg(2+) as cofactor.

It carries out the reaction succinate + ATP + CoA = succinyl-CoA + ADP + phosphate. The enzyme catalyses GTP + succinate + CoA = succinyl-CoA + GDP + phosphate. Its pathway is carbohydrate metabolism; tricarboxylic acid cycle; succinate from succinyl-CoA (ligase route): step 1/1. Its function is as follows. Succinyl-CoA synthetase functions in the citric acid cycle (TCA), coupling the hydrolysis of succinyl-CoA to the synthesis of either ATP or GTP and thus represents the only step of substrate-level phosphorylation in the TCA. The beta subunit provides nucleotide specificity of the enzyme and binds the substrate succinate, while the binding sites for coenzyme A and phosphate are found in the alpha subunit. The chain is Succinate--CoA ligase [ADP-forming] subunit beta from Cronobacter sakazakii (strain ATCC BAA-894) (Enterobacter sakazakii).